We begin with the raw amino-acid sequence, 1241 residues long: Interphotoreceptor matrix proteoglycan 2 (1241 aa).

A signal peptide spans 1–28 (MIMFLPLGRISLGILILFLTGGNLVSVS). At 29–1104 (EEIQDRMHAV…CEEFVSEPFV (1076 aa)) the chain is on the extracellular side. T193 carries an O-linked (GalNAc...) threonine glycan. Residues 206 to 234 (AASERSAASPQESISNEIENVTEQPTPPA) form a disordered region. Over residues 211 to 229 (SAASPQESISNEIENVTEQ) the composition is skewed to polar residues. An N-linked (GlcNAc...) asparagine glycan is attached at N225. T231 carries O-linked (GalNAc...) threonine glycosylation. Positions 235–349 (AEQIAEFSIQ…KPTAVYTISN (115 aa)) constitute an SEA 1 domain. Residues 255–263 (RDPSSALYR) form a hyaluronan-binding motif involved in chondroitin sulfate A-binding region. N297, N316, and N366 each carry an N-linked (GlcNAc...) asparagine glycan. T429, T430, and T431 each carry an O-linked (GalNAc...) threonine glycan. Positions 431–443 (TISPFGFSSGPPS) are enriched in low complexity. Disordered stretches follow at residues 431 to 456 (TISP…STLG) and 500 to 520 (VAPE…TEES). Residue T817 is glycosylated (O-linked (GalNAc...) threonine). N-linked (GlcNAc...) asparagine glycosylation is found at N841, N945, and N959. Residues 900 to 1013 (GALVVFFSLR…YSLDVESGDD (114 aa)) form the SEA 2 domain. EGF-like domains lie at 1013-1054 (DANP…LPCQ) and 1055-1096 (SVCD…QHCE). 6 disulfides stabilise this stretch: C1017/C1028, C1022/C1039, C1041/C1053, C1057/C1070, C1064/C1080, and C1082/C1095. The segment at 1083 to 1091 (RVGSNWWYR) is hyaluronan-binding motif involved in chondroitin sulfate C-binding. The chain crosses the membrane as a helical span at residues 1105–1125 (IGITIASVVSLLLVASAVVFF). Over 1126–1241 (LAKMLQAQNV…FVREHEMEEL (116 aa)) the chain is Cytoplasmic. Residues 1128–1136 (KMLQAQNVR) are hyaluronan-binding motif involved in chondroitin sulfate A- and C-binding. Residues 1139–1145 (RQRPTNR) are hyaluronan-binding motif involved in chondroitin sulfate C-binding. The tract at residues 1210 to 1218 (KEEIQERMR) is hyaluronan-binding motif involved in chondroitin sulfate A- and C-binding motif.

As to expression, expressed in the pineal gland and the outer layer of the retina.

The protein resides in the photoreceptor outer segment membrane. It is found in the photoreceptor inner segment membrane. The protein localises to the secreted. It localises to the extracellular space. Its subcellular location is the extracellular matrix. The protein resides in the interphotoreceptor matrix. Functionally, chondroitin sulfate- and hyaluronan-binding proteoglycan involved in the organization of interphotoreceptor matrix; may participate in the maturation and maintenance of the light-sensitive photoreceptor outer segment. Binds heparin. This Rattus norvegicus (Rat) protein is Interphotoreceptor matrix proteoglycan 2 (Impg2).